The following is a 364-amino-acid chain: FMNH(2)-dependent dimethylsulfone monooxygenase (364 aa).

It belongs to the SsuD family.

The enzyme catalyses dimethyl sulfone + FMNH2 + O2 = methanesulfinate + FMN + formaldehyde + H2O + 2 H(+). Functionally, involved in the dimethyl sulfide degradation pathway. Catalyzes the oxidation of dimethylsulfone (DMSO2) to yield methanesulfinate, which is oxidized spontaneously to methanesulfonate in the presence of dioxygen and FMNH(2). The polypeptide is FMNH(2)-dependent dimethylsulfone monooxygenase (Pseudomonas fluorescens (strain Pf0-1)).